The chain runs to 604 residues: Choline transporter-like protein 3 (604 aa).

N-linked (GlcNAc...) asparagine glycosylation is found at N90 and N103. Transmembrane regions (helical) follow at residues 165-185 (DTIL…LFTF), 195-215 (IIIS…WWLY), 237-257 (LAFA…IFTL), 286-306 (LWTF…LLSL), and 330-350 (YLWW…LTCQ). N-linked (GlcNAc...) asparagine glycosylation is found at N454 and N472. 2 helical membrane-spanning segments follow: residues 485–505 (FIIF…GLMA) and 514–534 (VWAI…HSFL). The span at 581 to 592 (NARSQGHKNSLP) shows a compositional bias: polar residues. Residues 581 to 604 (NARSQGHKNSLPNEEGTELRPIVR) form a disordered region.

The protein belongs to the CTL (choline transporter-like) family. As to expression, expressed in colon, kidney and ileum.

It localises to the membrane. This Rattus norvegicus (Rat) protein is Choline transporter-like protein 3 (Slc44a3).